Here is a 237-residue protein sequence, read N- to C-terminus: Ribosomal RNA small subunit methyltransferase G (237 aa).

S-adenosyl-L-methionine-binding positions include glycine 78, phenylalanine 83, 129-130, and arginine 148; that span reads AE.

Belongs to the methyltransferase superfamily. RNA methyltransferase RsmG family.

The protein localises to the cytoplasm. In terms of biological role, specifically methylates the N7 position of a guanine in 16S rRNA. In Streptococcus equi subsp. zooepidemicus (strain MGCS10565), this protein is Ribosomal RNA small subunit methyltransferase G.